Here is a 611-residue protein sequence, read N- to C-terminus: Actin-interacting protein 1 (611 aa).

WD repeat units follow at residues 57-96 (EHSH…HILK), 145-185 (GQAR…FKST), 188-227 (EHTK…KTGV), 237-276 (AHSG…VEKT), 322-361 (GHNK…SNRV), 446-485 (PISY…VSEV), 489-528 (VHPA…ELAH), 534-573 (FHTA…DHPI), and 579-610 (HAMS…WNVP).

The protein belongs to the WD repeat AIP1 family.

It is found in the cytoplasm. The protein localises to the cytoskeleton. In terms of biological role, induces disassembly of actin filaments in conjunction with ADF/cofilin family proteins. Regulator of actin organization in myofibrils. The sequence is that of Actin-interacting protein 1 (unc-78) from Caenorhabditis elegans.